The primary structure comprises 270 residues: 3-methyl-2-oxobutanoate hydroxymethyltransferase (270 aa).

Mg(2+) is bound by residues Asp-50 and Asp-89. 3-methyl-2-oxobutanoate contacts are provided by residues 50-51, Asp-89, and Lys-118; that span reads DS. Glu-120 contributes to the Mg(2+) binding site. Glu-187 acts as the Proton acceptor in catalysis.

Belongs to the PanB family. In terms of assembly, homodecamer; pentamer of dimers. It depends on Mg(2+) as a cofactor.

It is found in the cytoplasm. The enzyme catalyses 3-methyl-2-oxobutanoate + (6R)-5,10-methylene-5,6,7,8-tetrahydrofolate + H2O = 2-dehydropantoate + (6S)-5,6,7,8-tetrahydrofolate. It participates in cofactor biosynthesis; (R)-pantothenate biosynthesis; (R)-pantoate from 3-methyl-2-oxobutanoate: step 1/2. Its function is as follows. Catalyzes the reversible reaction in which hydroxymethyl group from 5,10-methylenetetrahydrofolate is transferred onto alpha-ketoisovalerate to form ketopantoate. The sequence is that of 3-methyl-2-oxobutanoate hydroxymethyltransferase from Helicobacter pylori (strain ATCC 700392 / 26695) (Campylobacter pylori).